Reading from the N-terminus, the 219-residue chain is Transcriptional regulatory protein QseB (219 aa).

Residues 2–116 (RILLIEDDML…EVAARLEALM (115 aa)) enclose the Response regulatory domain. Position 51 is a 4-aspartylphosphate (Asp-51). The ompR/PhoB-type DNA-binding region spans 124 to 218 (SNELRHGNVM…VHGIGYTLGE (95 aa)).

Post-translationally, phosphorylated by QseC.

Its subcellular location is the cytoplasm. Functionally, member of a two-component regulatory system QseB/QseC. Activates the flagella regulon by activating transcription of FlhDC. Currently it is not known whether this effect is direct or not. This is Transcriptional regulatory protein QseB (qseB) from Escherichia coli O157:H7.